Consider the following 700-residue polypeptide: UvrABC system protein B (700 aa).

A Helicase ATP-binding domain is found at 26–183 (SGLHRGDRIQ…RALVGIQYLR (158 aa)). An ATP-binding site is contributed by 39 to 46 (GVTGSGKT). The Beta-hairpin signature appears at 92–115 (YYDYYQPEAYVPSSDTYIEKDASI). The Helicase C-terminal domain occupies 430–596 (QVDDLLHEIR…GVTKSVDEVR (167 aa)). A disordered region spans residues 608 to 627 (REGEAPAPRRLASESAPRSR). Residues 631–666 (ETLVGELEIAMREAAVALDFEAAARLRDQLFEVRTA) enclose the UVR domain. Residues 667-700 (LGQAPSEARGNAQAPKRPPGSAPQRRAGGGRRGR) are disordered.

The protein belongs to the UvrB family. Forms a heterotetramer with UvrA during the search for lesions. Interacts with UvrC in an incision complex.

It is found in the cytoplasm. In terms of biological role, the UvrABC repair system catalyzes the recognition and processing of DNA lesions. A damage recognition complex composed of 2 UvrA and 2 UvrB subunits scans DNA for abnormalities. Upon binding of the UvrA(2)B(2) complex to a putative damaged site, the DNA wraps around one UvrB monomer. DNA wrap is dependent on ATP binding by UvrB and probably causes local melting of the DNA helix, facilitating insertion of UvrB beta-hairpin between the DNA strands. Then UvrB probes one DNA strand for the presence of a lesion. If a lesion is found the UvrA subunits dissociate and the UvrB-DNA preincision complex is formed. This complex is subsequently bound by UvrC and the second UvrB is released. If no lesion is found, the DNA wraps around the other UvrB subunit that will check the other stand for damage. This Gemmatimonas aurantiaca (strain DSM 14586 / JCM 11422 / NBRC 100505 / T-27) protein is UvrABC system protein B.